The sequence spans 405 residues: Divinyl chlorophyllide a 8-vinyl-reductase, chloroplastic (405 aa).

The N-terminal 58 residues, 1 to 58 (MAALLLSSHLTAASSSSTTSPTARPAPSFVSFRAANAAPKGARRGWPFLASSVEPPPA), are a transit peptide targeting the chloroplast.

It localises to the plastid. The protein localises to the chloroplast. The enzyme catalyses protochlorophyllide a + NADP(+) = 3,8-divinyl protochlorophyllide a + NADPH + H(+). It participates in porphyrin-containing compound metabolism; chlorophyll biosynthesis. In terms of biological role, catalyzes the conversion of divinyl chlorophyllide to monovinyl chlorophyllide. Reduces the 8-vinyl group of the tetrapyrrole to an ethyl group using NADPH as the reductant. Can use (3,8-divinyl)-chlorophyllide a (DV-Chlidea) &gt; (3,8-divinyl)-chlorophyll a (DV-Chla) &gt; (3,8-divinyl)-protochlorophyllide a (DV-Pchlidea) &gt; (3,8-divinyl)-magnesium-protoporphyrin IX monomethyl ester (DV-MPE) &gt; (3,8-divinyl)-magnesium-protoporphyrin IX (DV-Mg-Proto) as substrates. This Oryza sativa subsp. indica (Rice) protein is Divinyl chlorophyllide a 8-vinyl-reductase, chloroplastic (DVR).